The sequence spans 356 residues: Histidinol-phosphate aminotransferase 1 (356 aa).

Position 213 is an N6-(pyridoxal phosphate)lysine (K213).

It belongs to the class-II pyridoxal-phosphate-dependent aminotransferase family. Histidinol-phosphate aminotransferase subfamily. As to quaternary structure, homodimer. Pyridoxal 5'-phosphate serves as cofactor.

It catalyses the reaction L-histidinol phosphate + 2-oxoglutarate = 3-(imidazol-4-yl)-2-oxopropyl phosphate + L-glutamate. It functions in the pathway amino-acid biosynthesis; L-histidine biosynthesis; L-histidine from 5-phospho-alpha-D-ribose 1-diphosphate: step 7/9. This chain is Histidinol-phosphate aminotransferase 1, found in Burkholderia pseudomallei (strain K96243).